Reading from the N-terminus, the 422-residue chain is Probable glycosidase CRR1 (422 aa).

The signal sequence occupies residues 1–20 (MRISILQLVPVVGYIGFALG). Residues 67–339 (DEESCAPIPA…WENSPDIIEK (273 aa)) form the GH16 domain. The active-site Nucleophile is the Glu217. The Proton donor role is filled by Glu221.

Belongs to the glycosyl hydrolase 16 family. CRR1 subfamily.

It is found in the spore wall. Functionally, spore specific glycosidase involved in spore wall assembly during sporulation. May be involved in copper import. In Saccharomyces cerevisiae (strain ATCC 204508 / S288c) (Baker's yeast), this protein is Probable glycosidase CRR1 (CRR1).